Here is a 377-residue protein sequence, read N- to C-terminus: Chaperone protein DnaJ (377 aa).

The 66-residue stretch at 5 to 70 (DFYETLGVSK…QKRAAYDRFG (66 aa)) folds into the J domain. The CR-type zinc finger occupies 138–216 (GKTAQIRVPT…CHGQGRVTEE (79 aa)). Zn(2+)-binding residues include C151, C154, C168, C171, C190, C193, C204, and C207. 4 CXXCXGXG motif repeats span residues 151-158 (CDVCSGSG), 168-175 (CATCQGSG), 190-197 (CPTCHGRG), and 204-211 (CGKCHGQG).

The protein belongs to the DnaJ family. Homodimer. Zn(2+) is required as a cofactor.

The protein localises to the cytoplasm. Functionally, participates actively in the response to hyperosmotic and heat shock by preventing the aggregation of stress-denatured proteins and by disaggregating proteins, also in an autonomous, DnaK-independent fashion. Unfolded proteins bind initially to DnaJ; upon interaction with the DnaJ-bound protein, DnaK hydrolyzes its bound ATP, resulting in the formation of a stable complex. GrpE releases ADP from DnaK; ATP binding to DnaK triggers the release of the substrate protein, thus completing the reaction cycle. Several rounds of ATP-dependent interactions between DnaJ, DnaK and GrpE are required for fully efficient folding. Also involved, together with DnaK and GrpE, in the DNA replication of plasmids through activation of initiation proteins. The sequence is that of Chaperone protein DnaJ from Agrobacterium fabrum (strain C58 / ATCC 33970) (Agrobacterium tumefaciens (strain C58)).